The chain runs to 689 residues: DNA ligase (689 aa).

NAD(+)-binding positions include 40 to 44 (DAEYD), 89 to 90 (SL), and glutamate 121. Lysine 123 acts as the N6-AMP-lysine intermediate in catalysis. Residues arginine 144, glutamate 179, lysine 295, and lysine 319 each contribute to the NAD(+) site. Zn(2+) contacts are provided by cysteine 413, cysteine 416, cysteine 431, and cysteine 437. In terms of domain architecture, BRCT spans 610 to 689 (KEHSSLTGKI…EEWLTIVNNV (80 aa)).

It belongs to the NAD-dependent DNA ligase family. LigA subfamily. The cofactor is Mg(2+). It depends on Mn(2+) as a cofactor.

The enzyme catalyses NAD(+) + (deoxyribonucleotide)n-3'-hydroxyl + 5'-phospho-(deoxyribonucleotide)m = (deoxyribonucleotide)n+m + AMP + beta-nicotinamide D-nucleotide.. DNA ligase that catalyzes the formation of phosphodiester linkages between 5'-phosphoryl and 3'-hydroxyl groups in double-stranded DNA using NAD as a coenzyme and as the energy source for the reaction. It is essential for DNA replication and repair of damaged DNA. The polypeptide is DNA ligase (Rickettsia canadensis (strain McKiel)).